Consider the following 94-residue polypeptide: Probable Fe(2+)-trafficking protein (94 aa).

It belongs to the Fe(2+)-trafficking protein family.

In terms of biological role, could be a mediator in iron transactions between iron acquisition and iron-requiring processes, such as synthesis and/or repair of Fe-S clusters in biosynthetic enzymes. The sequence is that of Probable Fe(2+)-trafficking protein from Alcanivorax borkumensis (strain ATCC 700651 / DSM 11573 / NCIMB 13689 / SK2).